The chain runs to 203 residues: Thymidylate kinase (203 aa).

Position 7–14 (7–14 (GGEGAGKT)) interacts with ATP.

This sequence belongs to the thymidylate kinase family.

The enzyme catalyses dTMP + ATP = dTDP + ADP. Phosphorylation of dTMP to form dTDP in both de novo and salvage pathways of dTTP synthesis. This Chlamydia muridarum (strain MoPn / Nigg) protein is Thymidylate kinase (tmk).